A 471-amino-acid polypeptide reads, in one-letter code: Alpha-galactosidase (471 aa).

The first 18 residues, 1 to 18, serve as a signal peptide directing secretion; that stretch reads MFNLNFFNYTCHCEWCFW. Cys42 and Cys74 are disulfide-bonded. Asn43 carries an N-linked (GlcNAc...) asparagine glycan. Residues Asp72 and Asp73 each contribute to the substrate site. N-linked (GlcNAc...) asparagine glycosylation is present at Asn105. Cys121 and Cys151 are oxidised to a cystine. Position 147 (Lys147) interacts with substrate. The active-site Nucleophile is the Asp149. Asn175 carries an N-linked (GlcNAc...) asparagine glycan. Arg205 lines the substrate pocket. Residue Asp209 is the Proton donor of the active site. Disulfide bonds link Cys221–Cys237 and Cys223–Cys230. Gln251 serves as a coordination point for substrate. N-linked (GlcNAc...) asparagine glycosylation is found at Asn270, Asn370, Asn403, Asn417, Asn422, and Asn454.

This sequence belongs to the glycosyl hydrolase 27 family. In terms of assembly, homotetramer.

It is found in the secreted. It catalyses the reaction Hydrolysis of terminal, non-reducing alpha-D-galactose residues in alpha-D-galactosides, including galactose oligosaccharides, galactomannans and galactolipids.. This chain is Alpha-galactosidase (MEL), found in Saccharomyces paradoxus (Yeast).